The chain runs to 224 residues: Small ribosomal subunit protein uS3 (224 aa).

Residues 38–106 (LREYVKEKLG…EVYLNVVEVR (69 aa)) enclose the KH type-2 domain.

This sequence belongs to the universal ribosomal protein uS3 family. As to quaternary structure, part of the 30S ribosomal subunit. Forms a tight complex with proteins S10 and S14.

In terms of biological role, binds the lower part of the 30S subunit head. Binds mRNA in the 70S ribosome, positioning it for translation. The protein is Small ribosomal subunit protein uS3 of Anaeromyxobacter sp. (strain Fw109-5).